The sequence spans 61 residues: Small ribosomal subunit protein uS14 (61 aa).

Residues cysteine 24, cysteine 27, cysteine 40, and cysteine 43 each coordinate Zn(2+).

It belongs to the universal ribosomal protein uS14 family. Zinc-binding uS14 subfamily. As to quaternary structure, part of the 30S ribosomal subunit. Contacts proteins S3 and S10. Requires Zn(2+) as cofactor.

Its function is as follows. Binds 16S rRNA, required for the assembly of 30S particles and may also be responsible for determining the conformation of the 16S rRNA at the A site. This is Small ribosomal subunit protein uS14 from Sulfurovum sp. (strain NBC37-1).